Reading from the N-terminus, the 241-residue chain is Uridylate kinase (241 aa).

Residue 12–15 (KISG) coordinates ATP. The segment at 20 to 25 (GDKGNG) is involved in allosteric activation by GTP. Gly54 contributes to the UMP binding site. 2 residues coordinate ATP: Gly55 and Arg59. UMP is bound by residues Asp74 and 135 to 142 (TGNPYFST). Asn163, Tyr169, and Asp172 together coordinate ATP.

The protein belongs to the UMP kinase family. Homohexamer.

The protein localises to the cytoplasm. The catalysed reaction is UMP + ATP = UDP + ADP. It functions in the pathway pyrimidine metabolism; CTP biosynthesis via de novo pathway; UDP from UMP (UMPK route): step 1/1. Allosterically activated by GTP. Inhibited by UTP. Catalyzes the reversible phosphorylation of UMP to UDP. The chain is Uridylate kinase from Lactobacillus acidophilus (strain ATCC 700396 / NCK56 / N2 / NCFM).